The following is a 203-amino-acid chain: Alpha-amylase/subtilisin inhibitor (203 aa).

A compositionally biased stretch (polar residues) spans 1–12; it reads MGSRRAGSSSSP. Positions 1–22 are cleaved as a signal peptide; the sequence is MGSRRAGSSSSPLFWPAPPSRA. A disordered region spans residues 1–34; that stretch reads MGSRRAGSSSSPLFWPAPPSRAADPPPVHDTDGH. Residues 15–26 show a composition bias toward pro residues; the sequence is WPAPPSRAADPP. 2 disulfide bridges follow: Cys65–Cys112 and Cys166–Cys170.

It belongs to the protease inhibitor I3 (leguminous Kunitz-type inhibitor) family.

In terms of biological role, this protein inhibits independently subtilisin and alpha-amylase. In Hordeum vulgare (Barley), this protein is Alpha-amylase/subtilisin inhibitor.